The following is a 236-amino-acid chain: Ribose-5-phosphate isomerase A (236 aa).

Substrate contacts are provided by residues 31 to 34, 88 to 91, and 101 to 104; these read TGST, DGAD, and KGGG. Glutamate 110 serves as the catalytic Proton acceptor. Residue lysine 128 coordinates substrate.

This sequence belongs to the ribose 5-phosphate isomerase family. Homodimer.

It catalyses the reaction aldehydo-D-ribose 5-phosphate = D-ribulose 5-phosphate. The protein operates within carbohydrate degradation; pentose phosphate pathway; D-ribose 5-phosphate from D-ribulose 5-phosphate (non-oxidative stage): step 1/1. Catalyzes the reversible conversion of ribose-5-phosphate to ribulose 5-phosphate. In Thermosynechococcus vestitus (strain NIES-2133 / IAM M-273 / BP-1), this protein is Ribose-5-phosphate isomerase A.